A 546-amino-acid polypeptide reads, in one-letter code: Sulfite oxidase, mitochondrial (546 aa).

The N-terminal 80 residues, 1-80 (MLPRLYRSVA…YHDHRCRASQ (80 aa)), are a transit peptide targeting the mitochondrion. The Cytochrome b5 heme-binding domain maps to 83 to 162 (PRIYSKEDVR…LAEYKIGELN (80 aa)). Heme b is bound at residue His-119. Phosphoserine is present on Ser-124. Positions 144, 146, and 148 each coordinate heme b. The segment at 166–175 (RMSPPLEASD) is hinge. The segment at 176–402 (PYSNDPMRHP…YSHWQRRDYK (227 aa)) is moco domain. Residues 216 to 220 (FTRNH), Cys-265, Asp-323, His-362, Arg-367, and 378 to 380 (HVK) contribute to the Mo-molybdopterin site. A homodimerization region spans residues 403–539 (GFSPSVDWDT…RGVLSNAWHR (137 aa)).

As to quaternary structure, homodimer. Requires heme b as cofactor. Mo-molybdopterin is required as a cofactor.

The protein resides in the mitochondrion intermembrane space. It carries out the reaction sulfite + O2 + H2O = sulfate + H2O2. It participates in energy metabolism; sulfur metabolism. Its function is as follows. Catalyzes the oxidation of sulfite to sulfate, the terminal reaction in the oxidative degradation of sulfur-containing amino acids. The chain is Sulfite oxidase, mitochondrial from Rattus norvegicus (Rat).